The primary structure comprises 430 residues: Adenylosuccinate synthetase (430 aa).

GTP is bound by residues glycine 12 to lysine 18 and glycine 40 to threonine 42. Aspartate 13 serves as the catalytic Proton acceptor. Mg(2+)-binding residues include aspartate 13 and glycine 40. IMP contacts are provided by residues aspartate 13 to lysine 16, asparagine 38 to histidine 41, threonine 128, arginine 142, glutamine 223, threonine 238, and arginine 302. The active-site Proton donor is the histidine 41. Threonine 298 to arginine 304 provides a ligand contact to substrate. Residues arginine 304, serine 330–aspartate 332, and serine 412–glycine 414 each bind GTP.

It belongs to the adenylosuccinate synthetase family. As to quaternary structure, homodimer. Requires Mg(2+) as cofactor.

It localises to the cytoplasm. The enzyme catalyses IMP + L-aspartate + GTP = N(6)-(1,2-dicarboxyethyl)-AMP + GDP + phosphate + 2 H(+). The protein operates within purine metabolism; AMP biosynthesis via de novo pathway; AMP from IMP: step 1/2. Plays an important role in the de novo pathway of purine nucleotide biosynthesis. Catalyzes the first committed step in the biosynthesis of AMP from IMP. The sequence is that of Adenylosuccinate synthetase from Streptococcus pyogenes serotype M49 (strain NZ131).